A 944-amino-acid chain; its full sequence is UvrABC system protein A (944 aa).

The ABC transporter 1 domain maps to 1 to 242; it reads MSKVDFLHIK…GKGIVKVENV (242 aa). 34–41 is an ATP binding site; it reads GLSGSGKS. The segment at 256–283 adopts a C4-type; degenerate zinc-finger fold; sequence CPKGDFEMPKIETRLFSFNSPYGMCQNC. ABC transporter domains lie at 359–597 and 610–935; these read EEID…KYLS and SGSG…EKSY. 643 to 650 contacts ATP; that stretch reads GVSGSGKS. Residues 744–770 form a C4-type zinc finger; sequence CEKCSGDGSIKIEMFFLPNVYITCDHC.

It belongs to the ABC transporter superfamily. UvrA family. Forms a heterotetramer with UvrB during the search for lesions.

It localises to the cytoplasm. In terms of biological role, the UvrABC repair system catalyzes the recognition and processing of DNA lesions. UvrA is an ATPase and a DNA-binding protein. A damage recognition complex composed of 2 UvrA and 2 UvrB subunits scans DNA for abnormalities. When the presence of a lesion has been verified by UvrB, the UvrA molecules dissociate. In Mycoplasmopsis pulmonis (strain UAB CTIP) (Mycoplasma pulmonis), this protein is UvrABC system protein A.